The sequence spans 552 residues: Hydroxylamine reductase (552 aa).

Positions 5, 8, 20, and 27 each coordinate [2Fe-2S] cluster. Positions 251, 275, 319, 407, 435, 460, 494, and 496 each coordinate hybrid [4Fe-2O-2S] cluster. A Cysteine persulfide modification is found at cysteine 407.

The protein belongs to the HCP family. It depends on [2Fe-2S] cluster as a cofactor. Hybrid [4Fe-2O-2S] cluster is required as a cofactor.

It localises to the cytoplasm. It carries out the reaction A + NH4(+) + H2O = hydroxylamine + AH2 + H(+). Functionally, catalyzes the reduction of hydroxylamine to form NH(3) and H(2)O. The protein is Hydroxylamine reductase of Shigella sonnei (strain Ss046).